The following is a 313-amino-acid chain: Ribosomal RNA small subunit methyltransferase H (313 aa).

Residues 33 to 35 (GGH), Asp53, Phe80, Asp102, and Gln109 contribute to the S-adenosyl-L-methionine site. Residues 291–313 (SDEEMRANPRAQSAKLRAAEKIR) are disordered.

The protein belongs to the methyltransferase superfamily. RsmH family.

The protein localises to the cytoplasm. The catalysed reaction is cytidine(1402) in 16S rRNA + S-adenosyl-L-methionine = N(4)-methylcytidine(1402) in 16S rRNA + S-adenosyl-L-homocysteine + H(+). Functionally, specifically methylates the N4 position of cytidine in position 1402 (C1402) of 16S rRNA. This is Ribosomal RNA small subunit methyltransferase H from Heliobacterium modesticaldum (strain ATCC 51547 / Ice1).